A 76-amino-acid polypeptide reads, in one-letter code: Acyl carrier protein (76 aa).

The 75-residue stretch at 1–75 (MVFEKIKALI…DIVFYITKNT (75 aa)) folds into the Carrier domain. Serine 35 carries the post-translational modification O-(pantetheine 4'-phosphoryl)serine.

Belongs to the acyl carrier protein (ACP) family. Post-translationally, 4'-phosphopantetheine is transferred from CoA to a specific serine of apo-ACP by AcpS. This modification is essential for activity because fatty acids are bound in thioester linkage to the sulfhydryl of the prosthetic group.

The protein localises to the cytoplasm. The protein operates within lipid metabolism; fatty acid biosynthesis. Its function is as follows. Carrier of the growing fatty acid chain in fatty acid biosynthesis. This Onion yellows phytoplasma (strain OY-M) protein is Acyl carrier protein.